We begin with the raw amino-acid sequence, 236 residues long: Purine nucleoside phosphorylase DeoD-type (236 aa).

His5 is a binding site for a purine D-ribonucleoside. Phosphate is bound by residues Gly21, Arg25, Arg44, and 88–91 (RVGT). Residues 180-182 (EME) and 204-205 (SD) each bind a purine D-ribonucleoside. Residue Asp205 is the Proton donor of the active site.

This sequence belongs to the PNP/UDP phosphorylase family. In terms of assembly, homohexamer; trimer of homodimers.

The enzyme catalyses a purine D-ribonucleoside + phosphate = a purine nucleobase + alpha-D-ribose 1-phosphate. It carries out the reaction a purine 2'-deoxy-D-ribonucleoside + phosphate = a purine nucleobase + 2-deoxy-alpha-D-ribose 1-phosphate. Its function is as follows. Catalyzes the reversible phosphorolytic breakdown of the N-glycosidic bond in the beta-(deoxy)ribonucleoside molecules, with the formation of the corresponding free purine bases and pentose-1-phosphate. The polypeptide is Purine nucleoside phosphorylase DeoD-type (Shewanella loihica (strain ATCC BAA-1088 / PV-4)).